The chain runs to 189 residues: Interferon alpha-C (189 aa).

Residues 1-23 (MAPAWSFRLALLLLSCNAICSLG) form the signal peptide. 2 disulfide bridges follow: Cys24/Cys122 and Cys52/Cys162.

It belongs to the alpha/beta interferon family.

It localises to the secreted. Its function is as follows. Produced by macrophages, IFN-alpha have antiviral activities. Interferon stimulates the production of two enzymes: a protein kinase and an oligoadenylate synthetase. The sequence is that of Interferon alpha-C (IFNAC) from Bos taurus (Bovine).